The primary structure comprises 104 residues: Antitoxin HigA-2 (104 aa).

Residues 45 to 98 (IVSIREQFNMSRGVFARLLHTSSRTLENWEQGRSVPNGQAVTLLKLVQRHPETL) enclose the HTH cro/C1-type domain. Positions 56–75 (RGVFARLLHTSSRTLENWEQ) form a DNA-binding region, H-T-H motif.

Functionally, antitoxin component of a type II toxin-antitoxin (TA) system that counteracts the effect of the HigB-2 toxin. Binds to its own promoter and regulates transcription of the higB-2/higA-2 operon. This chain is Antitoxin HigA-2 (higA-2), found in Vibrio cholerae serotype O1 (strain ATCC 39315 / El Tor Inaba N16961).